Here is a 291-residue protein sequence, read N- to C-terminus: 4-hydroxy-tetrahydrodipicolinate synthase (291 aa).

Pyruvate is bound at residue threonine 44. Tyrosine 132 acts as the Proton donor/acceptor in catalysis. Lysine 160 (schiff-base intermediate with substrate) is an active-site residue. Isoleucine 202 contacts pyruvate.

It belongs to the DapA family. In terms of assembly, homotetramer; dimer of dimers.

It is found in the cytoplasm. It catalyses the reaction L-aspartate 4-semialdehyde + pyruvate = (2S,4S)-4-hydroxy-2,3,4,5-tetrahydrodipicolinate + H2O + H(+). It functions in the pathway amino-acid biosynthesis; L-lysine biosynthesis via DAP pathway; (S)-tetrahydrodipicolinate from L-aspartate: step 3/4. Its function is as follows. Catalyzes the condensation of (S)-aspartate-beta-semialdehyde [(S)-ASA] and pyruvate to 4-hydroxy-tetrahydrodipicolinate (HTPA). The sequence is that of 4-hydroxy-tetrahydrodipicolinate synthase from Rhizorhabdus wittichii (strain DSM 6014 / CCUG 31198 / JCM 15750 / NBRC 105917 / EY 4224 / RW1) (Sphingomonas wittichii).